The following is a 101-amino-acid chain: MSCYNPCLPCQPCGPTPLANSCNEPCVRQCQSSNVVIEPSSVVVILPGPILSSFPQNTVVGSSTSAAVGSILSCEGVPINSGCFDLSCITSRYCGSRCQPC.

At S2 the chain carries N-acetylserine.

It belongs to the avian keratin family. The avian keratins (F-ker, S-ker, C-ker and B-ker) are a complex mixture of very similar polypeptides.

In Columba livia (Rock dove), this protein is Feather keratin Cos2-3.